The primary structure comprises 238 residues: Uridylate kinase (238 aa).

10–13 (KFSG) provides a ligand contact to ATP. The tract at residues 18 to 23 (GDSGFG) is involved in allosteric activation by GTP. Gly52 is a UMP binding site. ATP-binding residues include Gly53 and Arg57. UMP is bound by residues Asp73 and 134–141 (TGNPFFTT). ATP contacts are provided by Thr161, Tyr167, and Asp170.

This sequence belongs to the UMP kinase family. Homohexamer.

The protein localises to the cytoplasm. It catalyses the reaction UMP + ATP = UDP + ADP. It participates in pyrimidine metabolism; CTP biosynthesis via de novo pathway; UDP from UMP (UMPK route): step 1/1. Its activity is regulated as follows. Allosterically activated by GTP. Inhibited by UTP. Catalyzes the reversible phosphorylation of UMP to UDP. This is Uridylate kinase from Campylobacter curvus (strain 525.92).